Reading from the N-terminus, the 281-residue chain is Ribosomal RNA small subunit methyltransferase A (281 aa).

Residues Asn-36, Leu-38, Gly-63, Glu-84, Asp-109, and Asn-127 each coordinate S-adenosyl-L-methionine.

This sequence belongs to the class I-like SAM-binding methyltransferase superfamily. rRNA adenine N(6)-methyltransferase family. RsmA subfamily.

The protein localises to the cytoplasm. The enzyme catalyses adenosine(1518)/adenosine(1519) in 16S rRNA + 4 S-adenosyl-L-methionine = N(6)-dimethyladenosine(1518)/N(6)-dimethyladenosine(1519) in 16S rRNA + 4 S-adenosyl-L-homocysteine + 4 H(+). Its function is as follows. Specifically dimethylates two adjacent adenosines (A1518 and A1519) in the loop of a conserved hairpin near the 3'-end of 16S rRNA in the 30S particle. May play a critical role in biogenesis of 30S subunits. This chain is Ribosomal RNA small subunit methyltransferase A, found in Borrelia garinii subsp. bavariensis (strain ATCC BAA-2496 / DSM 23469 / PBi) (Borreliella bavariensis).